Consider the following 94-residue polypeptide: Aspartyl/glutamyl-tRNA(Asn/Gln) amidotransferase subunit C (94 aa).

The protein belongs to the GatC family. As to quaternary structure, heterotrimer of A, B and C subunits.

The enzyme catalyses L-glutamyl-tRNA(Gln) + L-glutamine + ATP + H2O = L-glutaminyl-tRNA(Gln) + L-glutamate + ADP + phosphate + H(+). It catalyses the reaction L-aspartyl-tRNA(Asn) + L-glutamine + ATP + H2O = L-asparaginyl-tRNA(Asn) + L-glutamate + ADP + phosphate + 2 H(+). Functionally, allows the formation of correctly charged Asn-tRNA(Asn) or Gln-tRNA(Gln) through the transamidation of misacylated Asp-tRNA(Asn) or Glu-tRNA(Gln) in organisms which lack either or both of asparaginyl-tRNA or glutaminyl-tRNA synthetases. The reaction takes place in the presence of glutamine and ATP through an activated phospho-Asp-tRNA(Asn) or phospho-Glu-tRNA(Gln). This chain is Aspartyl/glutamyl-tRNA(Asn/Gln) amidotransferase subunit C, found in Campylobacter jejuni subsp. jejuni serotype O:6 (strain 81116 / NCTC 11828).